A 373-amino-acid chain; its full sequence is Anhydro-N-acetylmuramic acid kinase (373 aa).

12-19 (GTSLDGVD) lines the ATP pocket.

It belongs to the anhydro-N-acetylmuramic acid kinase family.

It carries out the reaction 1,6-anhydro-N-acetyl-beta-muramate + ATP + H2O = N-acetyl-D-muramate 6-phosphate + ADP + H(+). The protein operates within amino-sugar metabolism; 1,6-anhydro-N-acetylmuramate degradation. Its pathway is cell wall biogenesis; peptidoglycan recycling. Catalyzes the specific phosphorylation of 1,6-anhydro-N-acetylmuramic acid (anhMurNAc) with the simultaneous cleavage of the 1,6-anhydro ring, generating MurNAc-6-P. Is required for the utilization of anhMurNAc either imported from the medium or derived from its own cell wall murein, and thus plays a role in cell wall recycling. In Salmonella newport (strain SL254), this protein is Anhydro-N-acetylmuramic acid kinase.